Here is a 224-residue protein sequence, read N- to C-terminus: C-&gt;U-editing enzyme APOBEC-2 (224 aa).

The tract at residues 1 to 24 is disordered; that stretch reads MAQKEEAAVATEAASQNGEDLENL. Residues glutamate 60 and histidine 98 each contribute to the Zn(2+) site. Residues 64-169 form the CMP/dCMP-type deaminase domain; it reads GRNKTFLCYV…PEIQAALKKL (106 aa). Glutamate 100 functions as the Proton donor in the catalytic mechanism. Zn(2+)-binding residues include cysteine 128 and cysteine 131.

The protein belongs to the cytidine and deoxycytidylate deaminase family. In terms of assembly, homotetramer. The cofactor is Zn(2+). As to expression, expressed exclusively in heart and skeletal muscle.

It catalyses the reaction cytidine(6666) in apoB mRNA + H2O + H(+) = uridine(6666) in apoB mRNA + NH4(+). Functionally, probable C to U editing enzyme whose physiological substrate is not yet known. Does not display detectable apoB mRNA editing. Has a low intrinsic cytidine deaminase activity. May play a role in the epigenetic regulation of gene expression through the process of active DNA demethylation. In Homo sapiens (Human), this protein is C-&gt;U-editing enzyme APOBEC-2 (APOBEC2).